The following is a 240-amino-acid chain: Biosynthetic peptidoglycan transglycosylase (240 aa).

A helical membrane pass occupies residues 15–35; it reads WMVYLGAVVAIAWLATQAFYF.

Belongs to the glycosyltransferase 51 family.

The protein localises to the cell inner membrane. It catalyses the reaction [GlcNAc-(1-&gt;4)-Mur2Ac(oyl-L-Ala-gamma-D-Glu-L-Lys-D-Ala-D-Ala)](n)-di-trans,octa-cis-undecaprenyl diphosphate + beta-D-GlcNAc-(1-&gt;4)-Mur2Ac(oyl-L-Ala-gamma-D-Glu-L-Lys-D-Ala-D-Ala)-di-trans,octa-cis-undecaprenyl diphosphate = [GlcNAc-(1-&gt;4)-Mur2Ac(oyl-L-Ala-gamma-D-Glu-L-Lys-D-Ala-D-Ala)](n+1)-di-trans,octa-cis-undecaprenyl diphosphate + di-trans,octa-cis-undecaprenyl diphosphate + H(+). It functions in the pathway cell wall biogenesis; peptidoglycan biosynthesis. Functionally, peptidoglycan polymerase that catalyzes glycan chain elongation from lipid-linked precursors. The chain is Biosynthetic peptidoglycan transglycosylase from Paraburkholderia phytofirmans (strain DSM 17436 / LMG 22146 / PsJN) (Burkholderia phytofirmans).